A 283-amino-acid polypeptide reads, in one-letter code: MKQYLDLCQRIIDEGTWVENSRTGKRCLTVINADLVYNVDKNEFPLITTRKSFYKAAIAELLGYIRGYDNAADFRKIGCNTWNANANDNQAWLNNPHRKGVDDMGRVYGVQGRAWSKPDGGTIDQLRKIVDDLSKGIDDRGEILSFYNPGEFHMGCLRPCMHTHNFSLLGDTLHLTSFQRSCDVPLGLNFNQVQVFTLLALMAQITGHKAGTAFHKIVNAHIYEDQLELMRDVQIKREPLSSPKLVINPDIKSLEDLETWVTMDDFEVTGYEHHEAIKYPFSV.

DUMP is bound at residue Arg-22. The active-site Nucleophile is Cys-160. DUMP contacts are provided by residues 180–183 (RSCD), Asn-191, and 221–223 (HIY). Asp-183 lines the (6R)-5,10-methylene-5,6,7,8-tetrahydrofolate pocket. Residue Ser-282 participates in (6R)-5,10-methylene-5,6,7,8-tetrahydrofolate binding.

The protein belongs to the thymidylate synthase family. Bacterial-type ThyA subfamily. Homodimer.

It localises to the cytoplasm. The catalysed reaction is dUMP + (6R)-5,10-methylene-5,6,7,8-tetrahydrofolate = 7,8-dihydrofolate + dTMP. The protein operates within pyrimidine metabolism; dTTP biosynthesis. In terms of biological role, catalyzes the reductive methylation of 2'-deoxyuridine-5'-monophosphate (dUMP) to 2'-deoxythymidine-5'-monophosphate (dTMP) while utilizing 5,10-methylenetetrahydrofolate (mTHF) as the methyl donor and reductant in the reaction, yielding dihydrofolate (DHF) as a by-product. This enzymatic reaction provides an intracellular de novo source of dTMP, an essential precursor for DNA biosynthesis. In Shewanella halifaxensis (strain HAW-EB4), this protein is Thymidylate synthase.